Here is a 154-residue protein sequence, read N- to C-terminus: Protein disulfide-isomerase LQY1, chloroplastic (154 aa).

Residues 1 to 43 (MPVSAPSPPRLHSPFIHCPINFTPSSFSARNLRSPSTSYPRIK) constitute a chloroplast transit peptide. Residues 51-71 (VVAISVGVASVALGIGIPVFY) traverse the membrane as a helical segment. The CR-type zinc-finger motif lies at 77-147 (NAAKRENTQP…SGVQPRYLDR (71 aa)). Residues C87, C90, C98, C101, C121, C124, C132, and C135 each coordinate Zn(2+).

Belongs to the BSD2 chaperone family. Interacts with the photosystem II core subunits. Interacts with HHL1. Zn(2+) serves as cofactor.

It is found in the plastid. The protein resides in the chloroplast thylakoid membrane. It catalyses the reaction Catalyzes the rearrangement of -S-S- bonds in proteins.. Its function is as follows. Protein disulfide-isomerase probably involved upon formation of a complex with HHL1 in maintaining photosystem II (PSII) activity under high light by regulating repair and reassembly of PSII complexes. This is Protein disulfide-isomerase LQY1, chloroplastic from Arabidopsis thaliana (Mouse-ear cress).